The sequence spans 232 residues: Anti-sigma-K factor RskA (232 aa).

The Cytoplasmic segment spans residues 1–91; that stretch reads MTEPTDFQLL…QSRRQPRWRT (91 aa). A helical transmembrane segment spans residues 92–112; the sequence is AVFASAAAIAVGLGAFGLGVL. The Extracellular portion of the chain corresponds to 113–232; that stretch reads TRPSASPTVA…GTVLAELPLR (120 aa).

The protein belongs to the anti-sigma-K factor family.

The protein localises to the cell membrane. Functionally, an anti-sigma factor for extracytoplasmic function (ECF) sigma factor SigK. ECF sigma factors are held in an inactive form by an anti-sigma factor until released by regulated intramembrane proteolysis (RIP). RIP occurs when an extracytoplasmic signal triggers a concerted proteolytic cascade to transmit information and elicit cellular responses. The membrane-spanning regulatory substrate protein is first cut extracytoplasmically (site-1 protease, S1P), then within the membrane itself (site-2 protease, S2P, Rip1), while cytoplasmic proteases finish degrading the regulatory protein, liberating the sigma factor. This Mycobacterium ulcerans (strain Agy99) protein is Anti-sigma-K factor RskA (rskA).